The sequence spans 364 residues: Nucleoside ABC transporter permease protein NupB (364 aa).

Helical transmembrane passes span 9–29 (LVPL…MLAF), 77–99 (FNIG…ALSF), 105–125 (LLMI…MGFI), 138–158 (VITT…MIHS), 195–215 (TLNI…IIFT), 244–264 (LILS…VYGF), 284–304 (MAVA…ALLF), and 326–346 (VVTA…VMLP).

The protein belongs to the binding-protein-dependent transport system permease family. In terms of assembly, the complex is composed of two ATP-binding proteins (NupA), two transmembrane proteins (NupB and NupC) and a solute-binding protein (BmpA).

The protein resides in the cell membrane. Part of an ABC transporter complex involved in the uptake of all common nucleosides. Responsible for the translocation of the substrate across the membrane. The sequence is that of Nucleoside ABC transporter permease protein NupB from Lactococcus lactis subsp. cremoris (strain MG1363).